A 246-amino-acid chain; its full sequence is Flagellar brake protein YcgR (246 aa).

The 105-residue stretch at K128 to I232 folds into the PilZ domain.

This sequence belongs to the YcgR family. Monomer. Interacts with the flagellar basal bodies.

The protein resides in the bacterial flagellum basal body. Acts as a flagellar brake, regulating swimming and swarming in a bis-(3'-5') cyclic diguanylic acid (c-di-GMP)-dependent manner. Binds 1 c-di-GMP dimer per subunit. Increasing levels of c-di-GMP lead to decreased motility. In Thioalkalivibrio sulfidiphilus (strain HL-EbGR7), this protein is Flagellar brake protein YcgR.